The chain runs to 752 residues: MAEPRQEFDTMEDQAGDYTMLQDQEGDMDHGLKESPPQPPADDGSEEPGSETSDAKSTPTAEDVTAPLVEERAPDKQATAQSHTEIPEGTTAEEAGIGDTPNMEDQAAGHVTQEPQKVEIFSQSLLVEPGRREGQAPDSGISDWTHQQVPSMSGAPLPPQGLREATHQPLGTRPEDVERSHPASELLWQESPQKEAWGKDRLGSEEEVDEDITMDESSQESPPSQASLAPGTATPQARSVSASGVSGETTSIPGFPAEGSIPLPADFFSKVSAETQASPPEGPGTGPSEEGHEAAPEFTFHVEIKASAPKEQDLEGATVVGAPAEEQKARGPSVGKGTKEASLLEPTDKQPAAGLPGRPVSRVPQLKARVAGVSKDRTGNDEKKAKTSTPSCAKTPSNRPCLSPTRPTPGSSDPLIKPSSPAVCPEPATSPKYVSSVTPRNGSPGTKQMKLKGADGKTGAKIATPRGAATPGQKGTSNATRIPAKTTPSPKTPPGSGEPPKSGERSGYSSPGSPGTPGSRSRTPSLPTPPTREPKKVAVVRTPPKSPSASKSRLQTAPVPMPDLKNVRSKIGSTENLKHQPGGGKVQIINKKLDLSNVQSKCGSKDNIKHVPGGGSVHIVYKPVDLSKVTSKCGSLGNIHHKPGGGQVEVKSEKLDFKDRVQSKIGSLDNITHVPGGGNKKIETHKLTFRENAKAKTDHGAEIVYKSPVVSGDTSPRHLSNVSSTGSIDMVDSPQLATLADEVSASLAKQGL.

Residues 1–567 (MAEPRQEFDT…PVPMPDLKNV (567 aa)) are disordered. Ala2 is modified (N-acetylalanine). Tyr18 bears the Phosphotyrosine mark. A Glycyl lysine isopeptide (Lys-Gly) (interchain with G-Cter in ubiquitin) cross-link involves residue Lys33. Residues Ser35 and Ser50 each carry the phosphoserine modification. Positions 50-60 (SETSDAKSTPT) are enriched in polar residues. A phosphothreonine mark is found at Thr58, Thr60, and Thr100. The span at 142 to 151 (SDWTHQQVPS) shows a compositional bias: polar residues. Positions 173-182 (RPEDVERSHP) are enriched in basic and acidic residues. Phosphoserine occurs at positions 191 and 204. Over residues 192 to 204 (PQKEAWGKDRLGS) the composition is skewed to basic and acidic residues. Positions 205 to 218 (EEEVDEDITMDESS) are enriched in acidic residues. Residues 219 to 229 (QESPPSQASLA) show a composition bias toward low complexity. A compositionally biased stretch (polar residues) spans 233–252 (ATPQARSVSASGVSGETTSI). 2 stretches are compositionally biased toward basic and acidic residues: residues 289–313 (EEGHEAAPEFTFHVEIKASAPKEQD) and 374–385 (SKDRTGNDEKKA). Composition is skewed to polar residues over residues 387–400 (TSTPSCAKTPSNRP) and 432–446 (KYVSSVTPRNGSPGT). Residue Thr464 is modified to Phosphothreonine. Arg466 carries the post-translational modification Omega-N-methylarginine. Lys474 bears the N6,N6-dimethyllysine; alternate mark. Position 474 is an N6-acetyllysine; alternate (Lys474). Phosphothreonine is present on residues Thr480, Thr486, and Thr487. At Ser489 the chain carries Phosphoserine. Thr492 carries the phosphothreonine modification. Ser496, Ser502, and Ser506 each carry phosphoserine. Residues 498 to 525 (EPPKSGERSGYSSPGSPGTPGSRSRTPS) are compositionally biased toward low complexity. Tyr508 is subject to Phosphotyrosine. Phosphoserine is present on residues Ser509 and Ser510. At Ser513 the chain carries Phosphoserine; by CK1, PDPK1 and TTBK1. Residues Thr516 and Thr523 each carry the phosphothreonine modification. Ser525 is subject to Phosphoserine. Thr528 is subject to Phosphothreonine. Lys536 carries the N6-acetyllysine modification. Thr542 carries the phosphothreonine modification. Phosphoserine occurs at positions 546 and 548. Tau/MAP repeat units lie at residues 555–585 (QTAPVPMPDLKNVRSKIGSTENLKHQPGGGK), 586–616 (VQIINKKLDLSNVQSKCGSKDNIKHVPGGGS), 617–647 (VHIVYKPVDLSKVTSKCGSLGNIHHKPGGGQ), and 648–679 (VEVKSEKLDFKDRVQSKIGSLDNITHVPGGGN). A Glycyl lysine isopeptide (Lys-Gly) (interchain with G-Cter in ubiquitin) cross-link involves residue Lys565. Lys570 bears the N6-acetyllysine; alternate mark. Position 570 is an N6-methyllysine; alternate (Lys570). Residue Lys570 forms a Glycyl lysine isopeptide (Lys-Gly) (interchain with G-Cter in ubiquitin); alternate linkage. Ser573 is subject to Phosphoserine. A Glycyl lysine isopeptide (Lys-Gly) (interchain with G-Cter in ubiquitin) cross-link involves residue Lys578. Lys592 is subject to N6-acetyllysine; alternate. Residue Lys592 forms a Glycyl lysine isopeptide (Lys-Gly) (interchain with G-Cter in ubiquitin); alternate linkage. 2 positions are modified to phosphoserine: Ser596 and Ser600. Lys601 is subject to N6-acetyllysine. An intrachain disulfide couples Cys602 to Cys633. Phosphoserine is present on Ser604. Lys609 is modified (N6-acetyllysine; alternate). A Glycyl lysine isopeptide (Lys-Gly) (interchain with G-Cter in ubiquitin); alternate cross-link involves residue Lys609. Ser616 carries the phosphoserine modification. Lys622 carries the post-translational modification N6,N6-dimethyllysine; alternate. N6-acetyllysine; alternate is present on residues Lys622, Lys628, and Lys632. Glycyl lysine isopeptide (Lys-Gly) (interchain with G-Cter in ubiquitin); alternate cross-links involve residues Lys622, Lys628, and Lys632. A Phosphoserine modification is found at Ser635. 3 positions are modified to N6-acetyllysine; alternate: Lys642, Lys654, and Lys658. Residues Lys642, Lys654, and Lys658 each participate in a glycyl lysine isopeptide (Lys-Gly) (interchain with G-Cter in ubiquitin); alternate cross-link. Arg660 carries the post-translational modification Omega-N-methylarginine. Phosphoserine is present on Ser663. Lys664 is covalently cross-linked (Glycyl lysine isopeptide (Lys-Gly) (interchain with G-Cter in ubiquitin)). The residue at position 667 (Ser667) is a Phosphoserine. Lys680 is subject to N6-acetyllysine; alternate. Lys680 is covalently cross-linked (Glycyl lysine isopeptide (Lys-Gly) (interchain with G-Cter in ubiquitin); alternate). Residue Lys686 forms a Glycyl lysine isopeptide (Lys-Gly) (interchain with G-Cter in ubiquitin) linkage. The residue at position 696 (Lys696) is an N6-acetyllysine; alternate. A Glycyl lysine isopeptide (Lys-Gly) (interchain with G-Cter in ubiquitin); alternate cross-link involves residue Lys696. The residue at position 705 (Tyr705) is a Phosphotyrosine. Ser707 is subject to Phosphoserine; by CK1 and PDPK1. Ser711 carries the phosphoserine modification. Thr714 is modified (phosphothreonine). Position 715 is a phosphoserine; by CK1 and PDPK1 (Ser715). Ser720, Ser727, and Ser733 each carry phosphoserine. Thr738 carries the post-translational modification Phosphothreonine.

As to quaternary structure, interacts with MARK1, MARK2, MARK3 and MARK4. Interacts with SQSTM1 when polyubiquitinated. Interacts with PSMC2 through SQSTM1. Interacts with FKBP4. Binds to CSNK1D. Interacts with SGK1. Interacts with EPM2A; the interaction dephosphorylates MAPT at Ser-388. Interacts with PIN1. Interacts with LRRK2. Interacts with LRP1, leading to endocytosis; this interaction is reduced in the presence of LRPAP1/RAP. Polyubiquitinated. Requires functional TRAF6 and may provoke SQSTM1-dependent degradation by the proteasome. In terms of processing, phosphorylated at various serine and threonine residues in S-P or T-P motifs by proline-directed protein kinases (PDPK1, CDK1, CDK5, GSK3, MAPK) (a few sites per protein in interphase, more in mitosis), and at serine residues in K-X-G-S motifs by MAP/microtubule affinity-regulating kinase (MARK1, MARK2, MARK3, MARK4), causing detachment from microtubules, and their disassembly. Fetal Tau is much more phosphorylated than adult Tau. Phosphorylation at Ser-573 by BRSK1 and BRSK2 in neurons affects ability to bind microtubules and plays a role in neuron polarization. Phosphorylated by PHK. Dephosphorylation at several serine and threonine residues by the serine/threonine phosphatase PPP5C. Phosphorylation at Ser-204 by SGK1 mediates microtubule depolymerization and neurite formation in hippocampal neurons. In terms of tissue distribution, expressed in neurons. The larger forms (isoform tau-A and isoform tau-B) are preferentially expressed in the peripheral nervous system while the other are expressed in the central nervous system. Low amounts of the larger forms are also found in limited areas of the CNS.

The protein resides in the cytoplasm. It is found in the cytosol. It localises to the cell membrane. The protein localises to the cytoskeleton. Its subcellular location is the cell projection. The protein resides in the axon. It is found in the dendrite. It localises to the secreted. Its function is as follows. Promotes microtubule assembly and stability, and might be involved in the establishment and maintenance of neuronal polarity. The C-terminus binds axonal microtubules while the N-terminus binds neural plasma membrane components, suggesting that tau functions as a linker protein between both. Axonal polarity is predetermined by tau localization (in the neuronal cell) in the domain of the cell body defined by the centrosome. The short isoforms allow plasticity of the cytoskeleton whereas the longer isoforms may preferentially play a role in its stabilization. The polypeptide is Microtubule-associated protein tau (Rattus norvegicus (Rat)).